Here is a 676-residue protein sequence, read N- to C-terminus: Potassium voltage-gated channel subfamily KQT member 1 (676 aa).

Disordered regions lie at residues 1-28 (MAAASSPPRAERKRWGWGRLPGARRGSA) and 62-84 (APPASPAAPAAPPVASDLGPRPP). Over 1–120 (MAAASSPPRA…YNFLERPTGW (120 aa)) the chain is Cytoplasmic. Serine 27 is modified (phosphoserine; by PKA). Residues 62-73 (APPASPAAPAAP) are compositionally biased toward pro residues. The helical transmembrane segment at 121-142 (KCFVYHFAVFLIVLVCLIFSVL) threads the bilayer. Over 143–153 (STIEQYAALAT) the chain is Extracellular. Residues 154 to 176 (GTLFWMEIVLVVFFGTEYVVRLW) form a helical membrane-spanning segment. Residues 177 to 192 (SAGCRSKYVGLWGRLR) are Cytoplasmic-facing. A helical membrane pass occupies residues 193–218 (FARKPISIIDLIVVVASMVVLCVGSK). At 219–226 (GQVFATSA) the chain is on the extracellular side. A helical; Voltage-sensor transmembrane segment spans residues 227–242 (IRGIRFLQILRMLHVD). The interval 238 to 246 (MLHVDRQGG) is interaction with KCNE3. Topologically, residues 243 to 260 (RQGGTWRLLGSVVFIHRQ) are cytoplasmic. A 1,2-diacyl-sn-glycero-3-phospho-(1D-myo-inositol-4,5-bisphosphate) is bound at residue glutamine 244. Residues 261 to 283 (ELITTLYIGFLGLIFSSYFVYLA) form a helical membrane-spanning segment. Topologically, residues 284–299 (EKDAVNESGRVEFGSY) are extracellular. A glycan (N-linked (GlcNAc...) asparagine) is linked at asparagine 289. Positions 300–320 (ADALWWGVVTVTTIGYGDKVP) form an intramembrane region, pore-forming. Topologically, residues 321 to 322 (QT) are extracellular. The chain crosses the membrane as a helical span at residues 323-348 (WVGKTIASCFSVFAISFFALPAGILG). Topologically, residues 349–676 (SGFALKVQQK…VPRRGPDEGS (328 aa)) are cytoplasmic. The segment at 370-382 (AAASLIQTAWRCY) is interaction with CALM. Phosphoserine is present on residues serine 407 and serine 409. Residues 515-529 (KVIRRMQYFVAKKKF) are interaction with CALM; calcium-dependent. The tract at residues 535–572 (PYDVRDVIEQYSQGHLNLMVRIKELQRRLDQSIGKPSL) is interaction with KCNE1 C-terminus. The stretch at 585–621 (SNTIGARLNRVEDKVTQLDQRLALITDMLHQLLSLHG) forms a coiled coil. The segment at 588–616 (IGARLNRVEDKVTQLDQRLALITDMLHQL) is interaction with AKAP9. The tract at residues 589 to 620 (GARLNRVEDKVTQLDQRLALITDMLHQLLSLH) is C-terminal assembly domain (tetramerization). The disordered stretch occupies residues 620–676 (HGGSTPGSGGPPREGGAHITQPCGSGGSVDPELFLPSNTLPTYEQLTVPRRGPDEGS). Residues 623–632 (STPGSGGPPR) show a composition bias toward gly residues. Residues 655–664 (PSNTLPTYEQ) are compositionally biased toward polar residues.

The protein belongs to the potassium channel family. KQT (TC 1.A.1.15) subfamily. Kv7.1/KCNQ1 sub-subfamily. As to quaternary structure, tetramer. Heterotetramer with KCNE1; targets to the membrane raft. Interacts (via C-terminus) with calmodulin; forms a heterooctameric structure (with 4:4 KCNQ1:CALM stoichiometry); the interaction is calcium-independent, constitutive, participates in the proper assembly of a functional channel and also acts a calcium sensor. KCNQ1 channels interact more strongly with Ca(2+)-CALM than with apoCALM. Interacts with AKAP9; targets protein kinase A (PKA) catalytic and regulatory subunits and protein phosphatase 1 (PP1) to the KCNQ1-KCNE1 complex, allowing PKA-mediated phosphorylation and increase of delayed rectifier potassium channel activity. Interacts with KCNE2; forms a heterooligomer complex that targets to the membrane raft and leading to currents with an apparently instantaneous activation, a rapid deactivation process and a linear current-voltage relationship and decreases the amplitude of the outward current. Interacts with AP2M1; mediates estrogen-induced internalization via clathrin-coated vesicles. Interacts with NEDD4L; promotes internalization and decreases I(Ks) currents. Interacts with USP2; counteracts the NEDD4L-specific down-regulation of I(Ks) and restore plasma membrane localization. Heterotetramer with KCNQ5; has a voltage-gated potassium channel activity. Interacts with KCNE3; four KCNE3 molecules are bound to one KCNQ1 tetramer (4:4 KCNQ1:KCNE3 stoichiometry); alters membrane raft localization; affects KCNQ1 structure and gating properties. Interacts with KCNE4; impairs KCNQ1 localization in lipid rafts and inhibits voltage-gated potassium channel activity. Interacts with KCNE5; impairs KCNQ1 localization in lipid rafts and only conducts current upon strong and continued depolarization. Interacts with SLC5A3; forms coregulatory channel-transporter complexes that modulate Na(+)-coupled myo-inositol influx through the transporter. In terms of processing, phosphorylation at Ser-27 by PKA; increases delayed rectifier potassium channel activity of the KCNQ1-KCNE1 complex through a macromolecular complex that includes PKA, PP1, and the targeting protein AKAP9. Ubiquitinated by NEDD4L; promotes internalization. The ubiquitinylated form is internalized through a clathrin-mediated endocytosis by interacting with AP2M1 and is recycled back to the cell membrane via RAB4A and RAB11A. Post-translationally, deubiquitinated by USP2; counteracts the NEDD4L-specific down-regulation of I(Ks) and restores the membrane localization. As to expression, abundantly expressed in heart, pancreas, prostate, kidney, small intestine and peripheral blood leukocytes. Less abundant in placenta, lung, spleen, colon, thymus, testis and ovaries.

It localises to the cell membrane. The protein resides in the cytoplasmic vesicle membrane. The protein localises to the early endosome. It is found in the membrane raft. Its subcellular location is the endoplasmic reticulum. It localises to the basolateral cell membrane. The protein resides in the apical cell membrane. It catalyses the reaction K(+)(in) = K(+)(out). Its activity is regulated as follows. PIP2 molecule is essential to activate KCNQ channels by inducing the coupling of the voltage-sensing domain (VSD) and the pore-forming domain (PD). Upon channel activation, PIP2 disrupts the VSD-calmodulin/CALM interactions, causing the release of CALM from the VSD which triggers the opening of the gate. Calcium potentiates KCNQ1 channel current through calcium-bound CALM. Calcium-bound CALM competes with PIP2 to stabilize the channel open state. In terms of biological role, pore-forming subunit of the voltage-gated potassium (Kv) channel involved in the regulation of cardiomyocyte excitability and important in normal development and functions of myocardium, inner ear, stomach and colon. Associates with KCNE beta subunits that modulates current kinetics. Induces a voltage-dependent current by rapidly activating and slowly deactivating potassium-selective outward current. Also promotes a delayed voltage activated potassium current showing outward rectification characteristic. During beta-adrenergic receptor stimulation, participates in cardiac repolarization by associating with KCNE1 to form the I(Ks) cardiac potassium current that increases the amplitude and slows down the activation kinetics of outward potassium current I(Ks). Muscarinic agonist oxotremorine-M strongly suppresses KCNQ1/KCNE1 current. When associated with KCNE3, forms the potassium channel that is important for cyclic AMP-stimulated intestinal secretion of chloride ions. This interaction with KCNE3 is reduced by 17beta-estradiol, resulting in the reduction of currents. During conditions of increased substrate load, maintains the driving force for proximal tubular and intestinal sodium ions absorption, gastric acid secretion, and cAMP-induced jejunal chloride ions secretion. Allows the provision of potassium ions to the luminal membrane of the secretory canaliculus in the resting state as well as during stimulated acid secretion. When associated with KCNE2, forms a heterooligomer complex leading to currents with an apparently instantaneous activation, a rapid deactivation process and a linear current-voltage relationship and decreases the amplitude of the outward current. When associated with KCNE4, inhibits voltage-gated potassium channel activity. When associated with KCNE5, this complex only conducts current upon strong and continued depolarization. Also forms a heterotetramer with KCNQ5; has a voltage-gated potassium channel activity. Binds with phosphatidylinositol 4,5-bisphosphate. KCNQ1-KCNE2 channel associates with Na(+)-coupled myo-inositol symporter in the apical membrane of choroid plexus epithelium and regulates the myo-inositol gradient between blood and cerebrospinal fluid with an impact on neuron excitability. Non-functional alone but modulatory when coexpressed with the full-length isoform 1. The chain is Potassium voltage-gated channel subfamily KQT member 1 from Homo sapiens (Human).